The following is a 436-amino-acid chain: Glutamyl-tRNA reductase (436 aa).

Substrate contacts are provided by residues 52-55 (TCHR), Ser-105, 110-112 (EDQ), and Gln-116. Catalysis depends on Cys-53, which acts as the Nucleophile. Residue 184-189 (GAGEMG) coordinates NADP(+).

This sequence belongs to the glutamyl-tRNA reductase family. As to quaternary structure, homodimer.

The catalysed reaction is (S)-4-amino-5-oxopentanoate + tRNA(Glu) + NADP(+) = L-glutamyl-tRNA(Glu) + NADPH + H(+). Its pathway is porphyrin-containing compound metabolism; protoporphyrin-IX biosynthesis; 5-aminolevulinate from L-glutamyl-tRNA(Glu): step 1/2. Functionally, catalyzes the NADPH-dependent reduction of glutamyl-tRNA(Glu) to glutamate 1-semialdehyde (GSA). This Halobacterium salinarum (strain ATCC 29341 / DSM 671 / R1) protein is Glutamyl-tRNA reductase.